Consider the following 320-residue polypeptide: Mitochondrial glutamate carrier 2 (320 aa).

Solcar repeat units follow at residues L11 to L97, R105 to L215, and A224 to E313. 3 consecutive transmembrane segments (helical) span residues L17–A37, F66–I86, and E110–M128. Phosphoserine is present on S150. 3 helical membrane passes run G190–A210, F230–L250, and A293–E313.

The protein belongs to the mitochondrial carrier (TC 2.A.29) family.

The protein localises to the mitochondrion inner membrane. The enzyme catalyses L-glutamate(in) + H(+)(in) = L-glutamate(out) + H(+)(out). Responsible for the transport of glutamate from the cytosol into the mitochondrial matrix with the concomitant import of a proton (symport system). This chain is Mitochondrial glutamate carrier 2 (Slc25a18), found in Mus musculus (Mouse).